The following is a 480-amino-acid chain: Probable E3 ubiquitin protein ligase DRIPH (480 aa).

An RING-type zinc finger spans residues 16–57 (CPICTNPFKDATTISECLHTFCRSCIRNKFINERVNACPVCN). 4 disordered regions span residues 93–133 (GPKT…EPAN), 167–193 (RGRKASLPKKIDSKPEPELPPKEPKIK), 241–261 (TPPDIVEPEISSDDDTEESVE), and 280–356 (VNQN…EMKV). Residues 103–112 (SSKKKRKSRT) show a composition bias toward basic residues. The span at 113–133 (SLRVSSSRVSSSPDTPLEPAN) shows a compositional bias: low complexity. Basic and acidic residues predominate over residues 175–193 (KKIDSKPEPELPPKEPKIK). Positions 246–260 (VEPEISSDDDTEESV) are enriched in acidic residues. A compositionally biased stretch (polar residues) spans 298–309 (GQKLKTNGAATS).

It catalyses the reaction S-ubiquitinyl-[E2 ubiquitin-conjugating enzyme]-L-cysteine + [acceptor protein]-L-lysine = [E2 ubiquitin-conjugating enzyme]-L-cysteine + N(6)-ubiquitinyl-[acceptor protein]-L-lysine.. Its pathway is protein modification; protein ubiquitination. The polypeptide is Probable E3 ubiquitin protein ligase DRIPH (Arabidopsis thaliana (Mouse-ear cress)).